Consider the following 333-residue polypeptide: HTH-type transcriptional repressor PurR (333 aa).

In terms of domain architecture, HTH lacI-type spans 2–56; sequence ATIKDVAKLASVSTTTVSHVINKTRFVAEATQKRVWEAVEELNYAPSAVARSLKC. The segment at residues 4 to 23 is a DNA-binding region (H-T-H motif); the sequence is IKDVAKLASVSTTTVSHVIN. The DNA-binding element occupies 48–56; the sequence is SAVARSLKC. Hypoxanthine contacts are provided by Phe-73, Lys-189, Thr-191, Phe-220, and Asp-274.

In terms of assembly, homodimer.

It participates in purine metabolism; purine nucleotide biosynthesis [regulation]. In terms of biological role, is the main repressor of the genes involved in the de novo synthesis of purine nucleotides, regulating purB, purC, purEK, purF, purHD, purL, purMN and guaBA expression. PurR is allosterically activated to bind its cognate DNA by binding the purine corepressors, hypoxanthine or guanine, thereby effecting transcription repression. The chain is HTH-type transcriptional repressor PurR from Aliivibrio salmonicida (strain LFI1238) (Vibrio salmonicida (strain LFI1238)).